A 299-amino-acid polypeptide reads, in one-letter code: 4-hydroxy-tetrahydrodipicolinate synthase (299 aa).

T44 contacts pyruvate. Y133 (proton donor/acceptor) is an active-site residue. The Schiff-base intermediate with substrate role is filled by K162. I204 provides a ligand contact to pyruvate.

The protein belongs to the DapA family. Homotetramer; dimer of dimers.

The protein localises to the cytoplasm. It carries out the reaction L-aspartate 4-semialdehyde + pyruvate = (2S,4S)-4-hydroxy-2,3,4,5-tetrahydrodipicolinate + H2O + H(+). Its pathway is amino-acid biosynthesis; L-lysine biosynthesis via DAP pathway; (S)-tetrahydrodipicolinate from L-aspartate: step 3/4. In terms of biological role, catalyzes the condensation of (S)-aspartate-beta-semialdehyde [(S)-ASA] and pyruvate to 4-hydroxy-tetrahydrodipicolinate (HTPA). The chain is 4-hydroxy-tetrahydrodipicolinate synthase from Thermus thermophilus (strain ATCC 27634 / DSM 579 / HB8).